The primary structure comprises 483 residues: Glutamyl-tRNA(Gln) amidotransferase subunit A (483 aa).

Active-site charge relay system residues include Lys76 and Ser151. Ser175 (acyl-ester intermediate) is an active-site residue.

Belongs to the amidase family. GatA subfamily. Heterotrimer of A, B and C subunits.

The enzyme catalyses L-glutamyl-tRNA(Gln) + L-glutamine + ATP + H2O = L-glutaminyl-tRNA(Gln) + L-glutamate + ADP + phosphate + H(+). In terms of biological role, allows the formation of correctly charged Gln-tRNA(Gln) through the transamidation of misacylated Glu-tRNA(Gln) in organisms which lack glutaminyl-tRNA synthetase. The reaction takes place in the presence of glutamine and ATP through an activated gamma-phospho-Glu-tRNA(Gln). In Pseudomonas putida (strain W619), this protein is Glutamyl-tRNA(Gln) amidotransferase subunit A.